The chain runs to 153 residues: Cytochrome c-type biogenesis protein CcmE (153 aa).

The Cytoplasmic portion of the chain corresponds to 1–6; that stretch reads MNARRR. A helical; Signal-anchor for type II membrane protein transmembrane segment spans residues 7–27; sequence LWSLLMLILAVGTAATLTIMA. Topologically, residues 28-153 are periplasmic; that stretch reads LRRNLTYLYM…LDTPIAQTTP (126 aa). Residues histidine 121 and tyrosine 125 each contribute to the heme site. The span at 130–141 shows a compositional bias: polar residues; sequence LTNKMQPTPTQH. The interval 130–153 is disordered; it reads LTNKMQPTPTQHTHLDTPIAQTTP.

It belongs to the CcmE/CycJ family.

It localises to the cell inner membrane. Heme chaperone required for the biogenesis of c-type cytochromes. Transiently binds heme delivered by CcmC and transfers the heme to apo-cytochromes in a process facilitated by CcmF and CcmH. The sequence is that of Cytochrome c-type biogenesis protein CcmE from Xylella fastidiosa (strain 9a5c).